Consider the following 235-residue polypeptide: Carbohydrate deacetylase (235 aa).

Residues H61 and H124 each coordinate Mg(2+).

Belongs to the YdjC deacetylase family. The cofactor is Mg(2+).

Functionally, probably catalyzes the deacetylation of acetylated carbohydrates an important step in the degradation of oligosaccharides. This chain is Carbohydrate deacetylase, found in Bacillus cereus (strain 03BB102).